We begin with the raw amino-acid sequence, 471 residues long: Glutamate--tRNA ligase (471 aa).

The 'HIGH' region signature appears at Pro9–Gly19. Zn(2+) contacts are provided by Cys98, Cys100, Cys125, and His127. The 'KMSKS' region signature appears at Lys237 to Arg241. Residue Lys240 coordinates ATP.

The protein belongs to the class-I aminoacyl-tRNA synthetase family. Glutamate--tRNA ligase type 1 subfamily. As to quaternary structure, monomer. Zn(2+) is required as a cofactor.

It is found in the cytoplasm. It carries out the reaction tRNA(Glu) + L-glutamate + ATP = L-glutamyl-tRNA(Glu) + AMP + diphosphate. Its function is as follows. Catalyzes the attachment of glutamate to tRNA(Glu) in a two-step reaction: glutamate is first activated by ATP to form Glu-AMP and then transferred to the acceptor end of tRNA(Glu). The sequence is that of Glutamate--tRNA ligase from Shigella dysenteriae serotype 1 (strain Sd197).